We begin with the raw amino-acid sequence, 176 residues long: Small ribosomal subunit protein uS5c (176 aa).

Residues 26-89 (LVERLIKISR…TDGRKNLIEL (64 aa)) form the S5 DRBM domain.

This sequence belongs to the universal ribosomal protein uS5 family. In terms of assembly, part of the 30S ribosomal subunit. Contacts protein S4.

It localises to the plastid. The protein resides in the chloroplast. With S4 and S12 plays an important role in translational accuracy. In Phaeodactylum tricornutum (strain CCAP 1055/1), this protein is Small ribosomal subunit protein uS5c (rps5).